The primary structure comprises 687 residues: Chloride channel protein ClC-Kb (687 aa).

Over 1–50 (MEELVGLREGASKKPVPLQELWGPCPRIRRNIQGGLEWLKERLFRVGEDW) the chain is Cytoplasmic. Helical transmembrane passes span 51-82 (YFLV…KWLY) and 91-111 (LRYL…SGFS). The segment at residues 116-127 (PSSGGSGIPEVK) is an intramembrane region (helical). S121 contacts chloride. A run of 2 helical transmembrane segments spans residues 141–160 (IKNF…TGST) and 161–180 (IFLG…AAYL). Residues 203–224 (AGAAVGVATVFAAPISGVLFSI) constitute an intramembrane region (helical). The chain crosses the membrane as a helical span at residues 236–255 (YWRGFFAATCGAFMFHLLAV). Ca(2+)-binding residues include E259, E261, D278, and E281. A run of 2 helical transmembrane segments spans residues 282 to 310 (IFFF…LFFL) and 325 to 342 (PLYS…TYPP). The helical intramembrane region spans 349–360 (ASRLSMSEHLET). The next 2 membrane-spanning stretches (helical) occupy residues 400–420 (GTLV…TTIP) and 421–440 (IPAG…GRLF). F426 serves as a coordination point for chloride. Positions 464 to 496 (GAYALAGAAAFSGAVTHTLSTALLAFEVTGQLV) form an intramembrane region, helical. Residues 500 to 520 (PVLMAVLAANAISQSFQPSFY) form a helical membrane-spanning segment. The Cytoplasmic portion of the chain corresponds to 521–687 (DGTIIVKKLP…STLTNPPAPK (167 aa)). CBS domains lie at 551–609 (MNCA…EPAS) and 626–687 (CPTQ…PAPK).

This sequence belongs to the chloride channel (TC 2.A.49) family. CLCNKB subfamily. As to quaternary structure, homodimer. Interacts with BSND. N-glycosylated. As to expression, specifically expressed in the kidney, predominantly in the outer medulla and cortex. All nephron segments expressing BSND also express CLCNK proteins.

The protein localises to the basolateral cell membrane. The enzyme catalyses chloride(in) = chloride(out). It catalyses the reaction iodide(out) = iodide(in). The catalysed reaction is nitrate(in) = nitrate(out). It carries out the reaction bromide(in) = bromide(out). In terms of biological role, anion-selective channel permeable to small monovalent anions with ion selectivity for chloride &gt; bromide &gt; nitrate &gt; iodide. Forms a homodimeric channel where each subunit has its own ion conduction pathway. May conduct double-barreled currents controlled by two types of gates, two fast gates that control each subunit independently and a slow common gate that opens and shuts off both subunits simultaneously. Assembles with the regulatory subunit BSND/Barttin for sorting at the basolateral plasma membrane domain and functional switch to the ion conducting state. CLCNKB:BSND channels display mostly a linear current-voltage relationship controlled by common gate. Mediates chloride conductance along nephron segments, namely the thick ascending limb of Henle's loop, convoluted tubule and the collecting duct, contributing to the maintenance of systemic acid-base and electrolyte homeostasis. Conducts chloride currents in the stria vascularis of the inner ear to establish the endocochlear potential necessary for normal hearing. The chain is Chloride channel protein ClC-Kb from Mus musculus (Mouse).